Consider the following 745-residue polypeptide: Polyribonucleotide nucleotidyltransferase (745 aa).

Mg(2+) is bound by residues aspartate 487 and aspartate 493. The KH domain occupies proline 554 to isoleucine 613. The region spanning glycine 623–lysine 691 is the S1 motif domain. Residues glutamine 695–glutamate 745 are disordered. Basic and acidic residues predominate over residues leucine 701–glutamate 745.

It belongs to the polyribonucleotide nucleotidyltransferase family. Mg(2+) serves as cofactor.

The protein localises to the cytoplasm. The catalysed reaction is RNA(n+1) + phosphate = RNA(n) + a ribonucleoside 5'-diphosphate. Its function is as follows. Involved in mRNA degradation. Catalyzes the phosphorolysis of single-stranded polyribonucleotides processively in the 3'- to 5'-direction. The polypeptide is Polyribonucleotide nucleotidyltransferase (Methylorubrum extorquens (strain CM4 / NCIMB 13688) (Methylobacterium extorquens)).